The primary structure comprises 354 residues: Glycerol-1-phosphate dehydrogenase [NAD(P)+] (354 aa).

NAD(+)-binding positions include 103–107 (GRSVD) and 125–128 (TAAS). Aspartate 130 lines the substrate pocket. Serine 134 contributes to the NAD(+) binding site. Residue aspartate 176 coordinates substrate. Aspartate 176 and histidine 255 together coordinate Zn(2+). Residue histidine 259 coordinates substrate. Histidine 271 serves as a coordination point for Zn(2+).

The protein belongs to the glycerol-1-phosphate dehydrogenase family. Homodimer. Zn(2+) serves as cofactor.

Its subcellular location is the cytoplasm. The enzyme catalyses sn-glycerol 1-phosphate + NAD(+) = dihydroxyacetone phosphate + NADH + H(+). The catalysed reaction is sn-glycerol 1-phosphate + NADP(+) = dihydroxyacetone phosphate + NADPH + H(+). It functions in the pathway membrane lipid metabolism; glycerophospholipid metabolism. Its function is as follows. Catalyzes the NAD(P)H-dependent reduction of dihydroxyacetonephosphate (DHAP or glycerone phosphate) to glycerol 1-phosphate (G1P). The G1P thus generated is used as the glycerophosphate backbone of phospholipids in the cellular membranes of Archaea. In Nitrosopumilus maritimus (strain SCM1), this protein is Glycerol-1-phosphate dehydrogenase [NAD(P)+].